The sequence spans 181 residues: Inner membrane-spanning protein YciB (181 aa).

A run of 5 helical transmembrane segments spans residues 3–23 (FLFDLFPVILFFITFKIYGIY), 49–69 (TMLWVSLVLIVVFGSATLILQ), 76–96 (WKPSVLYWLFAAALLIAQAIF), 119–139 (VNASWAAFFAFMGAANLYVAF), and 149–169 (FKLFGFMGLMLVFVVLQGLML).

Belongs to the YciB family.

The protein resides in the cell inner membrane. Plays a role in cell envelope biogenesis, maintenance of cell envelope integrity and membrane homeostasis. The protein is Inner membrane-spanning protein YciB of Nitrosospira multiformis (strain ATCC 25196 / NCIMB 11849 / C 71).